Consider the following 212-residue polypeptide: Uracil phosphoribosyltransferase (212 aa).

Residues R78, R103, and 130–138 contribute to the 5-phospho-alpha-D-ribose 1-diphosphate site; that span reads DPMLATGSS. Residues I193 and 198-200 contribute to the uracil site; that span reads GDA. D199 serves as a coordination point for 5-phospho-alpha-D-ribose 1-diphosphate.

Belongs to the UPRTase family. Requires Mg(2+) as cofactor.

The enzyme catalyses UMP + diphosphate = 5-phospho-alpha-D-ribose 1-diphosphate + uracil. The protein operates within pyrimidine metabolism; UMP biosynthesis via salvage pathway; UMP from uracil: step 1/1. With respect to regulation, allosterically activated by GTP. Its function is as follows. Catalyzes the conversion of uracil and 5-phospho-alpha-D-ribose 1-diphosphate (PRPP) to UMP and diphosphate. This Pseudomonas fluorescens (strain SBW25) protein is Uracil phosphoribosyltransferase.